Reading from the N-terminus, the 295-residue chain is Large ribosomal subunit protein uL2 (295 aa).

Residues 243–295 (WRPHTRGTAMNPVDHPHGGGEGRTRGKHPESPWDGRRRDTRREGVRSTPISLS) form a disordered region. The segment covering 256–287 (DHPHGGGEGRTRGKHPESPWDGRRRDTRREGV) has biased composition (basic and acidic residues).

This sequence belongs to the universal ribosomal protein uL2 family. In terms of assembly, part of the 50S ribosomal subunit. Forms a bridge to the 30S subunit in the 70S ribosome.

Functionally, one of the primary rRNA binding proteins. Required for association of the 30S and 50S subunits to form the 70S ribosome, for tRNA binding and peptide bond formation. It has been suggested to have peptidyltransferase activity; this is somewhat controversial. Makes several contacts with the 16S rRNA in the 70S ribosome. This chain is Large ribosomal subunit protein uL2, found in Aquifex pyrophilus.